We begin with the raw amino-acid sequence, 1146 residues long: DNA polymerase II large subunit (1146 aa).

The protein belongs to the archaeal DNA polymerase II family. Heterodimer of a large subunit and a small subunit.

The catalysed reaction is DNA(n) + a 2'-deoxyribonucleoside 5'-triphosphate = DNA(n+1) + diphosphate. It carries out the reaction Exonucleolytic cleavage in the 3'- to 5'-direction to yield nucleoside 5'-phosphates.. In terms of biological role, possesses two activities: a DNA synthesis (polymerase) and an exonucleolytic activity that degrades single-stranded DNA in the 3'- to 5'-direction. Has a template-primer preference which is characteristic of a replicative DNA polymerase. In Methanosarcina barkeri (strain Fusaro / DSM 804), this protein is DNA polymerase II large subunit.